Consider the following 343-residue polypeptide: S-adenosylmethionine:tRNA ribosyltransferase-isomerase (343 aa).

This sequence belongs to the QueA family. Monomer.

It localises to the cytoplasm. It catalyses the reaction 7-aminomethyl-7-carbaguanosine(34) in tRNA + S-adenosyl-L-methionine = epoxyqueuosine(34) in tRNA + adenine + L-methionine + 2 H(+). It functions in the pathway tRNA modification; tRNA-queuosine biosynthesis. Functionally, transfers and isomerizes the ribose moiety from AdoMet to the 7-aminomethyl group of 7-deazaguanine (preQ1-tRNA) to give epoxyqueuosine (oQ-tRNA). The sequence is that of S-adenosylmethionine:tRNA ribosyltransferase-isomerase from Syntrophotalea carbinolica (strain DSM 2380 / NBRC 103641 / GraBd1) (Pelobacter carbinolicus).